The primary structure comprises 338 residues: MIQLENIEKHYESKKRRVIGVDQVSLDIKKGEIYGIVGYSGAGKSTLLRCMNVLERPTKGRVFVDGIDLLELNNKQLRKARQSIGMIFQGFYLVSSKTVVENVSFALKAAGVGKLERNKRALELLNLVGIEDKANQYPSQLSGGQKQRVSIARALANNPKVLLCDEATSALDPSTTKSILKLLKKINEQIGITIVIITHEMEVVKEICDRCAVMQNGKVIENGKTYDIFSDPNEKLTKDFIHTVLDFQLPEALLKQCNGTLLKLQFRGDIAAESVVSDMLQQHKVKGNILHGKVEYIKDKPLGVFIMEVSGDPSEISSAISYLEERIKQVEVIQHVSY.

The region spanning 2–241 is the ABC transporter domain; that stretch reads IQLENIEKHY…PNEKLTKDFI (240 aa). 38–45 contacts ATP; that stretch reads GYSGAGKS.

It belongs to the ABC transporter superfamily. Methionine importer (TC 3.A.1.24) family. The complex is composed of two ATP-binding proteins (MetN), two transmembrane proteins (MetI) and a solute-binding protein (MetQ).

It localises to the cell membrane. The enzyme catalyses L-methionine(out) + ATP + H2O = L-methionine(in) + ADP + phosphate + H(+). It catalyses the reaction D-methionine(out) + ATP + H2O = D-methionine(in) + ADP + phosphate + H(+). Its function is as follows. Part of the ABC transporter complex MetNIQ involved in methionine import. Responsible for energy coupling to the transport system. The sequence is that of Methionine import ATP-binding protein MetN 1 from Oceanobacillus iheyensis (strain DSM 14371 / CIP 107618 / JCM 11309 / KCTC 3954 / HTE831).